Consider the following 116-residue polypeptide: Protein SPIRAL1-like 1 (116 aa).

Over residues 1–12 (MSRGGSAGGGQS) the composition is skewed to gly residues. Residues 1–116 (MSRGGSAGGG…SSLGYLFGGN (116 aa)) form a disordered region. Residues 27–43 (AAKPAPAAAPAPAPAPA) show a composition bias toward pro residues. Over residues 44 to 60 (PAAAVAAPAEKPSPAKA) the composition is skewed to low complexity. A compositionally biased stretch (polar residues) spans 72–90 (GSRSNNNYHRADGQNTGNF). Gly residues predominate over residues 103–116 (PGGGSSLGYLFGGN).

The protein belongs to the SPIRAL1 family.

Acts in maintaining the cortical microtubules organization essential for anisotropic cell growth. This Oryza sativa subsp. japonica (Rice) protein is Protein SPIRAL1-like 1.